The chain runs to 618 residues: NAD(P)H-quinone oxidoreductase subunit 5, organellar chromatophore 2 (618 aa).

17 helical membrane passes run 16-36 (LIPIYGFAGMVVSLPWATGWI), 43-63 (TPAYLNLIISLVAFLHGSLAL), 99-119 (LAALELITGLSFIAQLYALGY), 129-149 (FFALAGFFEGAMSGVVLSDSL), 152-172 (SYFLLEMLTLSTYLLVGFWYA), 190-210 (GDVMLLMGVVALSAFAGGMEF), 220-240 (NTLTPLATTLLGLALIAGPIG), 267-287 (SVVVTCGAIVLMKLMPILHHS), 291-311 (IAVLLAIGTISALGGSLVSIA), 318-335 (TLSYSTTAYLGLVFIAIA), 348-368 (AHAIAKALLSMSIGSVIAVSN), 390-410 (LIAGAGLTGLLPLGCFWCFGL), 419-438 (APWFASIYLITNTLTALNLT), 461-481 (WQMALPMVVLLVAVALTPWMM), 495-515 (AITGITVATSGLVGLTIGAIV), 553-573 (IVSGCSYIASWFDTAIVNGFV), and 597-617 (SYILTVVITIVFLLAALSWLV).

This sequence belongs to the complex I subunit 5 family. In terms of assembly, NDH is composed of at least 16 different subunits, 5 of which are encoded in the nucleus.

It is found in the plastid. The protein resides in the organellar chromatophore thylakoid membrane. The enzyme catalyses a plastoquinone + NADH + (n+1) H(+)(in) = a plastoquinol + NAD(+) + n H(+)(out). It carries out the reaction a plastoquinone + NADPH + (n+1) H(+)(in) = a plastoquinol + NADP(+) + n H(+)(out). In terms of biological role, NDH shuttles electrons from NAD(P)H:plastoquinone, via FMN and iron-sulfur (Fe-S) centers, to quinones in the photosynthetic chain and possibly in a chloroplast respiratory chain. The immediate electron acceptor for the enzyme in this species is believed to be plastoquinone. Couples the redox reaction to proton translocation, and thus conserves the redox energy in a proton gradient. This is NAD(P)H-quinone oxidoreductase subunit 5, organellar chromatophore 2 (ndhF2) from Paulinella chromatophora.